The sequence spans 179 residues: Isopentenyl-diphosphate Delta-isomerase (179 aa).

2 residues coordinate Mn(2+): His24 and His30. Positions 28-160 (LLHRAFSIFI…PEKFTVWFLT (133 aa)) constitute a Nudix hydrolase domain. Cys65 is a catalytic residue. His67 serves as a coordination point for Mn(2+). Glu85 contacts Mg(2+). Mn(2+)-binding residues include Glu110 and Glu112. Glu112 is an active-site residue.

The protein belongs to the IPP isomerase type 1 family. In terms of assembly, homodimer. The cofactor is Mg(2+). Mn(2+) is required as a cofactor.

The protein resides in the cytoplasm. The catalysed reaction is isopentenyl diphosphate = dimethylallyl diphosphate. It functions in the pathway isoprenoid biosynthesis; dimethylallyl diphosphate biosynthesis; dimethylallyl diphosphate from isopentenyl diphosphate: step 1/1. Its function is as follows. Catalyzes the 1,3-allylic rearrangement of the homoallylic substrate isopentenyl (IPP) to its highly electrophilic allylic isomer, dimethylallyl diphosphate (DMAPP). The protein is Isopentenyl-diphosphate Delta-isomerase of Serratia proteamaculans (strain 568).